A 176-amino-acid polypeptide reads, in one-letter code: Peptide methionine sulfoxide reductase MsrA (176 aa).

The active site involves Cys-12.

The protein belongs to the MsrA Met sulfoxide reductase family.

The enzyme catalyses L-methionyl-[protein] + [thioredoxin]-disulfide + H2O = L-methionyl-(S)-S-oxide-[protein] + [thioredoxin]-dithiol. It catalyses the reaction [thioredoxin]-disulfide + L-methionine + H2O = L-methionine (S)-S-oxide + [thioredoxin]-dithiol. In terms of biological role, has an important function as a repair enzyme for proteins that have been inactivated by oxidation. Catalyzes the reversible oxidation-reduction of methionine sulfoxide in proteins to methionine. This is Peptide methionine sulfoxide reductase MsrA from Thermus thermophilus (strain ATCC 27634 / DSM 579 / HB8).